A 339-amino-acid chain; its full sequence is DNA-directed RNA polymerase subunit alpha (339 aa).

The segment at 1 to 234 (MIEKNWQELI…DQFQIFINFE (234 aa)) is alpha N-terminal domain (alpha-NTD). The segment at 251 to 339 (FNPALLRKVD…DLAKRFEDHV (89 aa)) is alpha C-terminal domain (alpha-CTD).

It belongs to the RNA polymerase alpha chain family. As to quaternary structure, homodimer. The RNAP catalytic core consists of 2 alpha, 1 beta, 1 beta' and 1 omega subunit. When a sigma factor is associated with the core the holoenzyme is formed, which can initiate transcription.

It catalyses the reaction RNA(n) + a ribonucleoside 5'-triphosphate = RNA(n+1) + diphosphate. Functionally, DNA-dependent RNA polymerase catalyzes the transcription of DNA into RNA using the four ribonucleoside triphosphates as substrates. In Maricaulis maris (strain MCS10) (Caulobacter maris), this protein is DNA-directed RNA polymerase subunit alpha.